The primary structure comprises 185 residues: Transcription termination/antitermination protein NusG (185 aa).

The 29-residue stretch at 134 to 162 (PGQMVRVIDGPFNDFDGLVEEVNYEKNRL) folds into the KOW domain.

This sequence belongs to the NusG family.

In terms of biological role, participates in transcription elongation, termination and antitermination. The sequence is that of Transcription termination/antitermination protein NusG from Xylella fastidiosa (strain 9a5c).